A 318-amino-acid polypeptide reads, in one-letter code: E3 ubiquitin-protein ligase NRDP1 (318 aa).

Residues 18-57 (CPICSGVLEEPVRAPHCEHAFCNACITQWFAQQQICPVDR) form an RING-type; degenerate zinc finger. The SIAH-type; degenerate zinc-finger motif lies at 78-138 (KLQISCDNAG…MPNHNCIKHL (61 aa)).

The enzyme catalyses S-ubiquitinyl-[E2 ubiquitin-conjugating enzyme]-L-cysteine + [acceptor protein]-L-lysine = [E2 ubiquitin-conjugating enzyme]-L-cysteine + N(6)-ubiquitinyl-[acceptor protein]-L-lysine.. The protein operates within protein modification; protein ubiquitination. Acts as E3 ubiquitin-protein ligase and regulates the degradation of target proteins. This Danio rerio (Zebrafish) protein is E3 ubiquitin-protein ligase NRDP1 (rnf41).